A 328-amino-acid chain; its full sequence is Malate dehydrogenase (328 aa).

12–18 (GAAGQIG) lines the NAD(+) pocket. 2 residues coordinate substrate: R95 and R101. NAD(+) is bound by residues N108, Q115, and 132-134 (VGN). Positions 134 and 165 each coordinate substrate. H190 acts as the Proton acceptor in catalysis.

This sequence belongs to the LDH/MDH superfamily. MDH type 2 family.

The enzyme catalyses (S)-malate + NAD(+) = oxaloacetate + NADH + H(+). Its function is as follows. Catalyzes the reversible oxidation of malate to oxaloacetate. The protein is Malate dehydrogenase of Variovorax paradoxus (strain S110).